We begin with the raw amino-acid sequence, 261 residues long: MRLYRDRAVVLRQHKLGEADRIVTLLTRQHGLVRAVAKGVRRTRSKFGSRLEPFAHIDVQLHPGRNLDIVTQVQAIDAFAADIVSDYGRYTTACAILETAERIAGEERAPAVALHRLTVGALRAIADQQRSRELILDAYLLRAMSIAGWAPAIGECARCATPGPHRAFHVAAGGSVCVHCRPAGAVTPPQGVLELMAALHDGDWAATDDVPQTQRTQASGLIAAHLQWHLERKLRTLPLVERGSRLNMSHGEEQPARSAAG.

The protein belongs to the RecO family.

Functionally, involved in DNA repair and RecF pathway recombination. The protein is DNA repair protein RecO of Mycobacteroides abscessus (strain ATCC 19977 / DSM 44196 / CCUG 20993 / CIP 104536 / JCM 13569 / NCTC 13031 / TMC 1543 / L948) (Mycobacterium abscessus).